A 361-amino-acid chain; its full sequence is Phosphoserine aminotransferase (361 aa).

Residues Ser9 and Arg42 each contribute to the L-glutamate site. Residues 76 to 77, Trp102, Thr153, Asp173, and Gln196 contribute to the pyridoxal 5'-phosphate site; that span reads AR. N6-(pyridoxal phosphate)lysine is present on Lys197. 238–239 lines the pyridoxal 5'-phosphate pocket; sequence NT.

Belongs to the class-V pyridoxal-phosphate-dependent aminotransferase family. SerC subfamily. Homodimer. The cofactor is pyridoxal 5'-phosphate.

The protein resides in the cytoplasm. It catalyses the reaction O-phospho-L-serine + 2-oxoglutarate = 3-phosphooxypyruvate + L-glutamate. The catalysed reaction is 4-(phosphooxy)-L-threonine + 2-oxoglutarate = (R)-3-hydroxy-2-oxo-4-phosphooxybutanoate + L-glutamate. It participates in amino-acid biosynthesis; L-serine biosynthesis; L-serine from 3-phospho-D-glycerate: step 2/3. Its pathway is cofactor biosynthesis; pyridoxine 5'-phosphate biosynthesis; pyridoxine 5'-phosphate from D-erythrose 4-phosphate: step 3/5. Its function is as follows. Catalyzes the reversible conversion of 3-phosphohydroxypyruvate to phosphoserine and of 3-hydroxy-2-oxo-4-phosphonooxybutanoate to phosphohydroxythreonine. In Serratia proteamaculans (strain 568), this protein is Phosphoserine aminotransferase.